The primary structure comprises 263 residues: Shikimate dehydrogenase (NADP(+)) (263 aa).

Residues 14–16 (SLS) and T60 contribute to the shikimate site. K64 functions as the Proton acceptor in the catalytic mechanism. Positions 85 and 100 each coordinate shikimate. Residues 123–127 (GAGGA), 146–151 (NRTPQR), and L205 contribute to the NADP(+) site. Y207 contributes to the shikimate binding site. G228 provides a ligand contact to NADP(+).

It belongs to the shikimate dehydrogenase family. As to quaternary structure, homodimer.

It carries out the reaction shikimate + NADP(+) = 3-dehydroshikimate + NADPH + H(+). It participates in metabolic intermediate biosynthesis; chorismate biosynthesis; chorismate from D-erythrose 4-phosphate and phosphoenolpyruvate: step 4/7. Functionally, involved in the biosynthesis of the chorismate, which leads to the biosynthesis of aromatic amino acids. Catalyzes the reversible NADPH linked reduction of 3-dehydroshikimate (DHSA) to yield shikimate (SA). This is Shikimate dehydrogenase (NADP(+)) from Thermus thermophilus (strain ATCC BAA-163 / DSM 7039 / HB27).